The chain runs to 311 residues: Bifunctional protein FolD (311 aa).

Residues 184–186 (GAS), I209, and I250 contribute to the NADP(+) site.

The protein belongs to the tetrahydrofolate dehydrogenase/cyclohydrolase family. As to quaternary structure, homodimer.

It catalyses the reaction (6R)-5,10-methylene-5,6,7,8-tetrahydrofolate + NADP(+) = (6R)-5,10-methenyltetrahydrofolate + NADPH. It carries out the reaction (6R)-5,10-methenyltetrahydrofolate + H2O = (6R)-10-formyltetrahydrofolate + H(+). Its pathway is one-carbon metabolism; tetrahydrofolate interconversion. Functionally, catalyzes the oxidation of 5,10-methylenetetrahydrofolate to 5,10-methenyltetrahydrofolate and then the hydrolysis of 5,10-methenyltetrahydrofolate to 10-formyltetrahydrofolate. The protein is Bifunctional protein FolD of Gluconacetobacter diazotrophicus (strain ATCC 49037 / DSM 5601 / CCUG 37298 / CIP 103539 / LMG 7603 / PAl5).